The primary structure comprises 361 residues: MDPLRQSPSPSSSRASSPRTLSCERLGYVGIEAVLDQLKIKAMKMGFEFNIMVVGQSGLGKSTMVNTLFKSKIWKSTMPGLRVPMPQTLQLHYVTHVIEENGVKLKLTVTDTPGFGDQINNDKCWDPILGYINEQYERYLQEEILITRQRHIPDTRVHCCIYFVPPTGHCLRPLDLEFLQRLCRAVNVVPVIARADSLTIEEREAFRHRIQDDLKTHSIEVYPQKSFDEDVNDKILNSKIRERIPFAVVGADREHMVNGRCVLGRKTKWGIIEVENMAHCEFPLLRDLLIRSHLQDLKDITHNVHYENYRIIRLKESHALPQGPGWVNLAPAPPPAPTGTRASPGPAKMCRWAEDNSDEDF.

Residues 45-316 (MGFEFNIMVV…ENYRIIRLKE (272 aa)) enclose the Septin-type G domain. The interaction with SEPTIN7 stretch occupies residues 45–318 (MGFEFNIMVV…YRIIRLKESH (274 aa)). The G1 motif stretch occupies residues 55–62 (GQSGLGKS). GTP contacts are provided by residues 55 to 62 (GQSGLGKS), Thr88, Gly114, 194 to 202 (RADSLTIEE), Gly250, and Arg265. The interval 111–114 (DTPG) is G3 motif. Residues 193 to 196 (ARAD) form a G4 motif region. Residues 257–361 (VNGRCVLGRK…WAEDNSDEDF (105 aa)) are self-association (via N-terminus) to polymerize octameric septin 12-7-6-2/4-2/4-6-7-12 filaments. The segment at 333-361 (PPPAPTGTRASPGPAKMCRWAEDNSDEDF) is disordered. The segment covering 338–347 (TGTRASPGPA) has biased composition (low complexity).

The protein belongs to the TRAFAC class TrmE-Era-EngA-EngB-Septin-like GTPase superfamily. Septin GTPase family. As to quaternary structure, septins polymerize into heterooligomeric protein complexes that form filaments, and can associate with cellular membranes, actin filaments and microtubules. GTPase activity is required for filament formation. Interacts with SEPTIN6 and SEPTIN11. Component of a octameric complex consisting of SEPTIN12, SEPTIN7, SEPTIN6 and SEPTIN2 or SEPTIN4 in the order 12-7-6-2-2-6-7-12 or 12-7-6-4-4-6-7-12 and located in the sperm annulus; the octamer polymerizes into filaments via the SEPTIN12 N- and C-termini; the SEPTIN12:SEPTIN7 association is mediated by the GTP-binding domains. Interacts with SPAG4 and LMNB1. Associates with alpha- and beta-tubulins.

The protein resides in the cytoplasm. It localises to the cytoskeleton. Its subcellular location is the spindle. The protein localises to the cell projection. It is found in the cilium. The protein resides in the flagellum. Filament-forming cytoskeletal GTPase. May play a role in cytokinesis (Potential). Involved in spermatogenesis. Involved in the morphogenesis of sperm heads and the elongation of sperm tails probably implicating the association with alpha- and beta-tubulins. Forms a filamentous structure with SEPTIN7, SEPTIN6, SEPTIN2 and probably SEPTIN4 at the sperm annulus which is required for the structural integrity and motility of the sperm tail during postmeiotic differentiation. The chain is Septin-12 from Bos taurus (Bovine).